The sequence spans 132 residues: L-ectoine synthase (132 aa).

Belongs to the ectoine synthase family.

The catalysed reaction is (2S)-4-acetamido-2-aminobutanoate = L-ectoine + H2O. Its pathway is amine and polyamine biosynthesis; ectoine biosynthesis; L-ectoine from L-aspartate 4-semialdehyde: step 3/3. Catalyzes the circularization of gamma-N-acetyl-alpha,gamma-diaminobutyric acid (ADABA) to ectoine (1,4,5,6-tetrahydro-2-methyl-4-pyrimidine carboxylic acid), which is an excellent osmoprotectant. In Streptomyces anulatus (Streptomyces chrysomallus), this protein is L-ectoine synthase (ectC).